A 436-amino-acid polypeptide reads, in one-letter code: UDP-N-acetylmuramate--L-alanine ligase (436 aa).

108–114 (GAHGKTS) is a binding site for ATP.

It belongs to the MurCDEF family.

The protein localises to the cytoplasm. The enzyme catalyses UDP-N-acetyl-alpha-D-muramate + L-alanine + ATP = UDP-N-acetyl-alpha-D-muramoyl-L-alanine + ADP + phosphate + H(+). It participates in cell wall biogenesis; peptidoglycan biosynthesis. In terms of biological role, cell wall formation. In Bacillus cereus (strain ZK / E33L), this protein is UDP-N-acetylmuramate--L-alanine ligase.